The following is a 2037-amino-acid chain: MDYDDSDFQNQNLHLAGEANNKFPPVLQPYALPKFDFDDTLNTHLRFDSLGESEAFLGIEGNEDNNWIEDFSRGSSGIVFSSGATESCAISRHNNVWSEATSSESVAMLLNSVGQDEVIVREDTIKKSDTSHELGCTMETVEPGQTSHERSLSKEETVNLQPNPSVDDTPGESSVVKTDDGQEQVLVKDDSPTAVEEASVEEKNSILTSNTATVEAIDTTDLGKIGTETTDNLLDQTEEKANVESRMEDDCSDGNVQTIITCSGELNNQSTLLPETSNDENVISDHIQSSYNRNDLTADARSILVEGHSDSHIDSASEVEKVEAENIGKTAKPDLKEIELSDVTVLERGDQAPSTLEVGGQDVSGTECQDLLVSTVHTSVAVEASLELAGELTTITNSVSIEKPELLSHQHMEVITSEHESTFQIETETYPQIHVFETSESVYISTMDSMVEAREGGVSKKSDNEGSARTSNLEQSMELPVNANDRDQDVKNSQILSESVVSGSVGYVSGGSTSELAESESQSDSIPTDKSETMIDSSLNLEELQPLSQDGAPAVSLTSSIDLHMVKTSSDDSDQGSYSETKKVYGEPENGQTVPPVDASCSGSQMDQEARKRAEGTKQSTYSVEGCPRSEGSKDAVDADGVGQVLQQQSEELIFEENVVTEAVKAPETLSVLDKDNKNEMPITSSLPILGSEAGKDGQEEDNTAASGGIMAAGTPVTHPKGDAIVLGDSRASTCSESSVKSYVTAIEDAATNLKTPLDSFPTVKTSELQFNNTETNSVKKPEDQNISGFMSAGSPVLNRNETSSSEMNLTPDQLKAGKISKAVIFSQATLVSPIVVGSPSTSSLDKTAAKSSKAKSERKPRRTSKSVGKETSRKGTSVKGATPIEQFQSGGKTNAVNQSLASHIQITQSTEKQRSLQSPALKAFGSLSTPTASLPDLNSSALSSILRRPFTDLQQVQLRAQIFVYGALIQGTAPDEAYMISAFGGADGGKGSWEKSWRTCVVRAQKSLVATPETPLQSRPGKTETPSAGHTNSKESSGTNPMIPLSSPLWSLSTSVDTLQSSSVQRGSAATHQPLLSASHAHQTPPTQNIVGHNTPWMSPLPFRNAWLASQQTSGFDVGSRFPVYPITDPVKLTPMKESSMTLSGAKHVQSGTSSNVSKVTPTLEPTSTVVAPAQHSTRVKSRKRKKMPVSVESGPNILNSLKQTELAASPLVPFTPTPANLGYNAGTLPSVVSMTAVPMDLVSTFPGKKIKSSFPSPIFGGNLVREVKQRSVLSEDTIEKLKEAKMHAEDASALATAAVSHSEYVWKQIEQQSHAGLQPETQDRLASAAVAIAAAAAVAKAAAAAANVAANAALQAKLMAEEASLPNASDQGLPKSYDSILPGQGTPASILKGEGAVVNSSSVLIAAREASKKRVEAATAATKRAENMDSIVKAAELASEAVSQAGILVSMGHPPLLNKLVEAGPSNYWRQAQESQEVQPCKTVVLEKETVSTSEGTFAGPKIVQTEFGGSVNTADGVSGPVPATGKLKGQEGDKYADLAKNNDVVFEPEVGSKFSIDAQQTIKATKNEDIKEGSNVEVFKEEPGLRTAWYSANVLSLEDDKAYVLFSDLSVEQGTDKLKEWVALKGEGDQAPKIRPARSVTALPYEGTRKRRRAALGDHIWKIGDRVDSWVHDSWLEGVITEKNKKDENTVTVHFPAEEETLTIKAWNLRPSLVWKDGKWIECSSSGETISSSHEGDTPKEKRPRLGTPALVAEVKDTSMKIVDDPDLGKPPQTGVLNLGVSENTFNIGKSTREENKPDPLRMKRTGLQKQGSKVIFGVPKPGKKRKFMDVSKHYVSEASTKTQERKEPVKPVRSIVPQNSGIGSWKMPSKTISIEKQTTISRPKTFKPAPKPKEKPGATARIIPRKDSRNTTASDMESDESAENRGPGSGVSFKGTVEEQTTSSSHDTGSKNSSSLSTNKGRVAPTAGRLAKIEEDKALAENSSKTSEGMEPRRSIRRIQPTSRLLEGLQTSMMTSKIPSVSHSKSHLSQSKK.

Disordered regions lie at residues 141–179 (VEPG…VKTD), 454–487 (REGG…NDRD), 504–531 (SVGY…TDKS), 567–637 (KTSS…KDAV), 686–705 (SLPI…DNTA), 837–893 (VGSP…SGGK), 1011–1045 (ATPE…PMIP), 1148–1197 (KHVQ…ESGP), 1729–1748 (SGET…KRPR), 1793–1812 (KSTR…TGLQ), and 1841–2037 (EAST…QSKK). Basic and acidic residues predominate over residues 147–157 (SHERSLSKEET). Residues 158 to 176 (VNLQPNPSVDDTPGESSVV) are compositionally biased toward polar residues. Basic and acidic residues predominate over residues 454–466 (REGGVSKKSDNEG). A compositionally biased stretch (low complexity) spans 504-514 (SVGYVSGGSTS). The segment covering 515 to 526 (ELAESESQSDSI) has biased composition (polar residues). Residues 841–852 (STSSLDKTAAKS) show a composition bias toward low complexity. Over residues 853–865 (SKAKSERKPRRTS) the composition is skewed to basic residues. Composition is skewed to polar residues over residues 1025 to 1041 (ETPS…SGTN) and 1151 to 1171 (QSGT…TSTV). Basic residues predominate over residues 1179-1189 (TRVKSRKRKKM). Residues 1794 to 1805 (STREENKPDPLR) are compositionally biased toward basic and acidic residues. Polar residues-rich tracts occupy residues 1874–1886 (KTIS…TISR), 1942–1964 (EEQT…STNK), and 2013–2023 (LQTSMMTSKIP). Basic residues predominate over residues 2028–2037 (SKSHLSQSKK).

In terms of assembly, interacts with importin alpha IMPA1 and IMPA2, required for nuclear-localized proteins import. As to expression, mainly expressed in seedlings, flower buds and stems, and, to a lower extent, in leaves and siliques.

It localises to the nucleus. In terms of biological role, under salt stress, appears to prevent the accumulation of reactive oxygen species (ROS) in roots and required for the maintenance of cell wall integrity (cellulose, pectin and lignin composition) by interacting with importin alpha (e.g. IMPA1 and IMPA2) and binding to the promoter of several ROS- and cell wall-related genes to regulate their expression. Necessary for cells organization in meristems and root elongation zones as well as for root elongation in high salinity, but not upon osmotic stress. The protein is Protein SWOLLEN 1 of Arabidopsis thaliana (Mouse-ear cress).